Reading from the N-terminus, the 489-residue chain is ATP synthase subunit beta 1 (489 aa).

An ATP-binding site is contributed by 159–166 (GGAGVGKT). Positions 465–477 (EKSKKAAEDKPKA) are enriched in basic and acidic residues. Positions 465-489 (EKSKKAAEDKPKAEEDEDATSLHDA) are disordered.

This sequence belongs to the ATPase alpha/beta chains family. As to quaternary structure, F-type ATPases have 2 components, CF(1) - the catalytic core - and CF(0) - the membrane proton channel. CF(1) has five subunits: alpha(3), beta(3), gamma(1), delta(1), epsilon(1). CF(0) has three main subunits: a(1), b(2) and c(9-12). The alpha and beta chains form an alternating ring which encloses part of the gamma chain. CF(1) is attached to CF(0) by a central stalk formed by the gamma and epsilon chains, while a peripheral stalk is formed by the delta and b chains.

Its subcellular location is the cell inner membrane. The enzyme catalyses ATP + H2O + 4 H(+)(in) = ADP + phosphate + 5 H(+)(out). Produces ATP from ADP in the presence of a proton gradient across the membrane. The catalytic sites are hosted primarily by the beta subunits. This Marinomonas sp. (strain MWYL1) protein is ATP synthase subunit beta 1.